The sequence spans 208 residues: Uracil phosphoribosyltransferase (208 aa).

5-phospho-alpha-D-ribose 1-diphosphate is bound by residues R78, R103, and 130 to 138 (DPMLATGGS). Uracil contacts are provided by residues I193 and 198–200 (GDA). D199 contributes to the 5-phospho-alpha-D-ribose 1-diphosphate binding site.

This sequence belongs to the UPRTase family. The cofactor is Mg(2+).

It carries out the reaction UMP + diphosphate = 5-phospho-alpha-D-ribose 1-diphosphate + uracil. Its pathway is pyrimidine metabolism; UMP biosynthesis via salvage pathway; UMP from uracil: step 1/1. With respect to regulation, allosterically activated by GTP. Functionally, catalyzes the conversion of uracil and 5-phospho-alpha-D-ribose 1-diphosphate (PRPP) to UMP and diphosphate. The protein is Uracil phosphoribosyltransferase of Histophilus somni (strain 129Pt) (Haemophilus somnus).